A 292-amino-acid chain; its full sequence is Shikimate dehydrogenase (NADP(+)) (292 aa).

Residues 22–24 (SLS) and serine 69 each bind shikimate. Lysine 73 acts as the Proton acceptor in catalysis. Shikimate is bound by residues asparagine 94 and aspartate 111. NADP(+) contacts are provided by residues 135–139 (GVGGA) and isoleucine 236. Shikimate is bound at residue tyrosine 238. Glycine 260 serves as a coordination point for NADP(+).

It belongs to the shikimate dehydrogenase family. Homodimer.

The catalysed reaction is shikimate + NADP(+) = 3-dehydroshikimate + NADPH + H(+). The protein operates within metabolic intermediate biosynthesis; chorismate biosynthesis; chorismate from D-erythrose 4-phosphate and phosphoenolpyruvate: step 4/7. Involved in the biosynthesis of the chorismate, which leads to the biosynthesis of aromatic amino acids. Catalyzes the reversible NADPH linked reduction of 3-dehydroshikimate (DHSA) to yield shikimate (SA). The chain is Shikimate dehydrogenase (NADP(+)) from Streptococcus pyogenes serotype M3 (strain ATCC BAA-595 / MGAS315).